The chain runs to 353 residues: Pupal cuticle protein PCP52 (353 aa).

Positions 1–15 (MRVLILSAFIACATA) are cleaved as a signal peptide. Residues 166–195 (AEAPEGNKDEGNKDSVQVESSATESESDKA) are disordered. Positions 179 to 189 (DSVQVESSATE) are enriched in polar residues.

In terms of biological role, component of the cuticle of the pupa of Galleria mellonella. In Galleria mellonella (Greater wax moth), this protein is Pupal cuticle protein PCP52 (PCP52).